The following is a 453-amino-acid chain: Tubulin alpha-2 chain (453 aa).

Gln11 serves as a coordination point for GTP. At Lys40 the chain carries N6-acetyllysine. Residues Glu71, Gly144, Thr145, Thr179, Asn206, and Asn228 each contribute to the GTP site. Glu71 provides a ligand contact to Mg(2+). The active site involves Glu254. The disordered stretch occupies residues 432 to 453 (YEEVGAETAEGEGEEEDFGEEY).

It belongs to the tubulin family. As to quaternary structure, dimer of alpha and beta chains. A typical microtubule is a hollow water-filled tube with an outer diameter of 25 nm and an inner diameter of 15 nM. Alpha-beta heterodimers associate head-to-tail to form protofilaments running lengthwise along the microtubule wall with the beta-tubulin subunit facing the microtubule plus end conferring a structural polarity. Microtubules usually have 13 protofilaments but different protofilament numbers can be found in some organisms and specialized cells. The cofactor is Mg(2+). Post-translationally, undergoes a tyrosination/detyrosination cycle, the cyclic removal and re-addition of a C-terminal tyrosine residue by the enzymes tubulin tyrosine carboxypeptidase (TTCP) and tubulin tyrosine ligase (TTL), respectively. Acetylation of alpha chains at Lys-40 stabilizes microtubules and affects affinity and processivity of microtubule motors. This modification has a role in multiple cellular functions, ranging from cell motility, cell cycle progression or cell differentiation to intracellular trafficking and signaling.

It localises to the cytoplasm. The protein resides in the cytoskeleton. The catalysed reaction is GTP + H2O = GDP + phosphate + H(+). Its function is as follows. Tubulin is the major constituent of microtubules, a cylinder consisting of laterally associated linear protofilaments composed of alpha- and beta-tubulin heterodimers. Microtubules grow by the addition of GTP-tubulin dimers to the microtubule end, where a stabilizing cap forms. Below the cap, tubulin dimers are in GDP-bound state, owing to GTPase activity of alpha-tubulin. This chain is Tubulin alpha-2 chain (TUBA2), found in Pelvetia fastigiata (Brown alga).